The chain runs to 432 residues: MAGCAMNLQFSSVVKVRNEISSFGICNRDFVFRDLAKAMKVPVLRIRGGSGRQRSRLFVVNMSQSPIEPQSGGFAATEQIKGEGDNSILGKDNVRNLGTDQLENLDIDGNVGDGFNGSDGNGGGGGGGNGGEGDGEGEDYEEKEFGPILKFEEVMKETEARGATLPSDMLEAAKNYGIRKVLLLRYLDLQSSAGLLGFAIRSWAMLRNRMLADPSFLFKIGAEIVIDSCCATVAEVQKRGKDFWAEFELYVADLLVGTVVNIALVGMLAPYVRFGQPSASPGFLGRMVFAYNALPSSVFEAERPGCRFSAQQRLATYFYKGIMYGAVGFGCGIVGQGIANLIMTAKRNINKSEENIPVPPLIKSAALWGVFLSVSSNTRYQIINGLERVVEASPFAKKFPPAAMAFTVGVRLANNIYGGMQFVDWARLSGCQ.

The N-terminal 47 residues, 1 to 47 (MAGCAMNLQFSSVVKVRNEISSFGICNRDFVFRDLAKAMKVPVLRIR), are a transit peptide targeting the chloroplast. A disordered region spans residues 109–140 (GNVGDGFNGSDGNGGGGGGGNGGEGDGEGEDY). The segment covering 111 to 132 (VGDGFNGSDGNGGGGGGGNGGE) has biased composition (gly residues). 2 helical membrane-spanning segments follow: residues 249–269 (LYVA…GMLA) and 322–342 (IMYG…ANLI).

The protein belongs to the RETICULATA family. As to expression, highly expressed in the vasculature of developing leaf primordia, margins of fully expanded leaves, hydathodes of rosette of cauline leaves, basal region of the lamina, stipules, root tips, stamens and in the abscission zone of the funiculus.

The protein localises to the plastid. It localises to the chloroplast membrane. May play a role in leaf development. Required for leaf mesophyll cell division in the early stages of leaf organogenesis. Acts in a developmental pathway that involves PPT1/CUE1 but does not include ASE2/DOV1. The chain is Protein RETICULATA, chloroplastic from Arabidopsis thaliana (Mouse-ear cress).